The chain runs to 108 residues: UPF0145 protein Fnod_0426 (108 aa).

Belongs to the UPF0145 family.

The sequence is that of UPF0145 protein Fnod_0426 from Fervidobacterium nodosum (strain ATCC 35602 / DSM 5306 / Rt17-B1).